The sequence spans 428 residues: Large envelope protein (428 aa).

Gly-2 carries the N-myristoyl glycine; by host lipid modification. The tract at residues 2-145 (GNNIKVTFDP…PPLRDTHPHL (144 aa)) is pre-S1. Residues 2–204 (GNNIKVTFDP…PLTIGDPVLS (203 aa)) form a pre-S region. Over 2 to 211 (GNNIKVTFDP…VLSTEMSPSG (210 aa)) the chain is Virion surface; in external conformation. Residues 2–283 (GNNIKVTFDP…NGFRWMYLRR (282 aa)) lie on the Intravirion; in internal conformation side of the membrane. Asn-3 carries an N-linked (GlcNAc...) asparagine glycan. Residues 110-144 (RDIPRGIVPPQTPSNRDQRRKPTPLTPPLRDTHPH) form a disordered region. The tract at residues 146–204 (TMKNQTGHLQGFAEGLRALTTSDHHNSAYGDPFTTLSPVVPTVSTTLSPPLTIGDPVLS) is pre-S2. The chain crosses the membrane as a helical span at residues 212 to 232 (LLGLLAGLQVVYFLWTKILTI). Residues 233 to 283 (AQSLDWWWTSLSFPGGIPECTGQNLQFQTCKHLPTSCPPTCNGFRWMYLRR) lie on the Intravirion; in external conformation side of the membrane. Residues 284–304 (FIIYLLVLLLFLTFLLVLLDW) form a helical membrane-spanning segment. The Virion surface segment spans residues 305 to 376 (KGLLPVCPMM…WALARFSWLS (72 aa)). Asn-348 carries an N-linked (GlcNAc...) asparagine; by host glycan. The chain crosses the membrane as a helical span at residues 377–397 (LLVPLLQWLGGISLTVWLLLI). The Intravirion portion of the chain corresponds to 398 to 403 (WMIWFW). A helical transmembrane segment spans residues 404–426 (GPVLMSILPPFIPIFALFFLIWA). Topologically, residues 427-428 (YI) are virion surface.

The protein belongs to the orthohepadnavirus major surface antigen family. As to quaternary structure, in its internal form (Li-HBsAg), interacts with the capsid protein and with the isoform S. Interacts with host chaperone CANX. In terms of assembly, associates with host chaperone CANX through its pre-S2 N glycan; this association may be essential for isoform M proper secretion. Interacts with isoform L. Interacts with the antigens of satellite virus HDV (HDVAgs); this interaction is required for encapsidation of HDV genomic RNA. In terms of processing, isoform M is N-terminally acetylated by host at a ratio of 90%, and N-glycosylated by host at the pre-S2 region. Post-translationally, myristoylated.

It localises to the virion membrane. The large envelope protein exists in two topological conformations, one which is termed 'external' or Le-HBsAg and the other 'internal' or Li-HBsAg. In its external conformation the protein attaches the virus to cell receptors and thereby initiating infection. This interaction determines the species specificity and liver tropism. This attachment induces virion internalization predominantly through caveolin-mediated endocytosis. The large envelope protein also assures fusion between virion membrane and endosomal membrane. In its internal conformation the protein plays a role in virion morphogenesis and mediates the contact with the nucleocapsid like a matrix protein. In terms of biological role, the middle envelope protein plays an important role in the budding of the virion. It is involved in the induction of budding in a nucleocapsid independent way. In this process the majority of envelope proteins bud to form subviral lipoprotein particles of 22 nm of diameter that do not contain a nucleocapsid. The chain is Large envelope protein from Ground squirrel hepatitis virus (strain 27) (GSHV).